Consider the following 527-residue polypeptide: Eukaryotic translation initiation factor 3 subunit D (527 aa).

The segment at 100-136 is disordered; it reads QQNKRGGSNAGGRGGRGGMRGGRFGSNNKYWNDRRQR. Residues 107 to 123 show a composition bias toward gly residues; the sequence is SNAGGRGGRGGMRGGRF. Residues 264–277 are RNA gate; sequence SEHLTVNENLTAHH. Residues 503-527 are disordered; it reads DQIEEETQEEEEEEQSKGWVEESRE. Acidic residues predominate over residues 504–516; it reads QIEEETQEEEEEE. A compositionally biased stretch (basic and acidic residues) spans 517–527; that stretch reads QSKGWVEESRE.

The protein belongs to the eIF-3 subunit D family. In terms of assembly, component of the eukaryotic translation initiation factor 3 (eIF-3) complex.

The protein resides in the cytoplasm. MRNA cap-binding component of the eukaryotic translation initiation factor 3 (eIF-3) complex, which is involved in protein synthesis of a specialized repertoire of mRNAs and, together with other initiation factors, stimulates binding of mRNA and methionyl-tRNAi to the 40S ribosome. The eIF-3 complex specifically targets and initiates translation of a subset of mRNAs involved in cell proliferation. In the eIF-3 complex, eif3d specifically recognizes and binds the 7-methylguanosine cap of a subset of mRNAs. The polypeptide is Eukaryotic translation initiation factor 3 subunit D (eif3d) (Dictyostelium discoideum (Social amoeba)).